Here is a 358-residue protein sequence, read N- to C-terminus: Pyruvate dehydrogenase E1 component subunit alpha (358 aa).

Heterodimer of an alpha and a beta chain. The cofactor is thiamine diphosphate.

It carries out the reaction N(6)-[(R)-lipoyl]-L-lysyl-[protein] + pyruvate + H(+) = N(6)-[(R)-S(8)-acetyldihydrolipoyl]-L-lysyl-[protein] + CO2. Functionally, the pyruvate dehydrogenase complex catalyzes the overall conversion of pyruvate to acetyl-CoA and CO(2). It contains multiple copies of three enzymatic components: pyruvate dehydrogenase (E1), dihydrolipoamide acetyltransferase (E2) and lipoamide dehydrogenase (E3). This chain is Pyruvate dehydrogenase E1 component subunit alpha (pdhA), found in Mycoplasma genitalium (strain ATCC 33530 / DSM 19775 / NCTC 10195 / G37) (Mycoplasmoides genitalium).